We begin with the raw amino-acid sequence, 316 residues long: Acetyl-coenzyme A carboxylase carboxyl transferase subunit beta (316 aa).

In terms of domain architecture, CoA carboxyltransferase N-terminal spans 39–308 (LWHKCSKCGV…PPHMVLWETM (270 aa)). Positions 43, 46, 62, and 65 each coordinate Zn(2+). The C4-type zinc-finger motif lies at 43–65 (CSKCGVLAYTKDLKANQMVCIEC).

Belongs to the AccD/PCCB family. Acetyl-CoA carboxylase is a heterohexamer composed of biotin carboxyl carrier protein (AccB), biotin carboxylase (AccC) and two subunits each of ACCase subunit alpha (AccA) and ACCase subunit beta (AccD). It depends on Zn(2+) as a cofactor.

The protein resides in the cytoplasm. It catalyses the reaction N(6)-carboxybiotinyl-L-lysyl-[protein] + acetyl-CoA = N(6)-biotinyl-L-lysyl-[protein] + malonyl-CoA. Its pathway is lipid metabolism; malonyl-CoA biosynthesis; malonyl-CoA from acetyl-CoA: step 1/1. Its function is as follows. Component of the acetyl coenzyme A carboxylase (ACC) complex. Biotin carboxylase (BC) catalyzes the carboxylation of biotin on its carrier protein (BCCP) and then the CO(2) group is transferred by the transcarboxylase to acetyl-CoA to form malonyl-CoA. In Nostoc punctiforme (strain ATCC 29133 / PCC 73102), this protein is Acetyl-coenzyme A carboxylase carboxyl transferase subunit beta.